Consider the following 429-residue polypeptide: DNA primase DnaG (429 aa).

One can recognise a Toprim domain in the interval 172 to 246 (DSIIVVEGRN…DVDFIARAPP (75 aa)). Mg(2+) contacts are provided by Glu-178, Asp-220, and Asp-222. Residues 287–322 (RNTKELEERQGNELKNERPEKINENEESEKNVELKE) are disordered.

The protein belongs to the archaeal DnaG primase family. In terms of assembly, forms a ternary complex with MCM helicase and DNA. Component of the archaeal exosome complex. Mg(2+) is required as a cofactor.

It catalyses the reaction ssDNA + n NTP = ssDNA/pppN(pN)n-1 hybrid + (n-1) diphosphate.. RNA polymerase that catalyzes the synthesis of short RNA molecules used as primers for DNA polymerase during DNA replication. Also part of the exosome, which is a complex involved in RNA degradation. Acts as a poly(A)-binding protein that enhances the interaction between heteromeric, adenine-rich transcripts and the exosome. This chain is DNA primase DnaG, found in Picrophilus torridus (strain ATCC 700027 / DSM 9790 / JCM 10055 / NBRC 100828 / KAW 2/3).